Consider the following 394-residue polypeptide: GDNF family receptor alpha-like (394 aa).

Positions 1 to 19 (MLVFIFLAVRLSSENESSS) are cleaved as a signal peptide. Over 20-350 (QTNDCAYFMR…LTGFNSPFSG (331 aa)) the chain is Extracellular. N-linked (GlcNAc...) asparagine glycans are attached at residues Asn65, Asn101, and Asn115. 11 disulfide bridges follow: Cys132–Cys190, Cys139–Cys145, Cys156–Cys168, Cys163–Cys211, Cys192–Cys199, Cys221–Cys292, Cys228–Cys234, Cys245–Cys276, Cys253–Cys259, Cys270–Cys317, and Cys294–Cys305. A required for interaction with GDF15 region spans residues 150–229 (ALYLKACTAN…TCLSVIHTCR (80 aa)). Residues 351–371 (ELIYVVVCMVVTSGILSLVML) traverse the membrane as a helical segment. Residues 372 to 394 (KLRIPSKKRDPAPIEIAGAVIIQ) are Cytoplasmic-facing.

It belongs to the GDNFR family. Interacts (via the extracellular domain) with GDF15 and RET; receptor of GDF15, mediates cellular signaling through interaction with RET after GDF15-binding. Interaction with RET requires previous GDF15-binding. Post-translationally, cleaved and inactivated by MMP14, inhibiting the GDF15-GFRAL aversive response. In terms of tissue distribution, expressed in the brainstem, restricted to cells in the area postrema and the immediately adjacent region of the nucleus tractus solitarius. Detected at low levels in testis.

The protein resides in the cell membrane. Its function is as follows. Brainstem-restricted receptor for GDF15 hormone, which triggers an aversive response, characterized by nausea, vomiting, and/or loss of appetite in response to various stresses. The aversive response is both required to reduce continuing exposure to those stresses at the time of exposure and to promote avoidance behavior in the future. The GDF15-GFRAL aversive response is triggered by stresses, such as anticancer drugs (camptothecin or cisplatin), cancers or drugs such as metformin. Upon interaction with its ligand, GDF15, mediates the GDF15-induced autophosphorylation and activation of the RET tyrosine kinase receptor, leading to activation of MAPK- and AKT- signaling pathways. Ligand-binding activates GFRAL-expressing neurons localized in the area postrema and nucleus tractus solitarius of the brainstem. The GDF15-GFRAL signal induces expression of genes involved in metabolism, such as lipid metabolism in adipose tissues. The protein is GDNF family receptor alpha-like of Rattus norvegicus (Rat).